Here is a 311-residue protein sequence, read N- to C-terminus: Cytosolic Fe-S cluster assembly factor Nubp1 homolog (311 aa).

Residues Cys9, Cys23, Cys26, and Cys32 each contribute to the [4Fe-4S] cluster site. An ATP-binding site is contributed by 63-70 (GKGGVGKS). Residues Cys241 and Cys244 each coordinate [4Fe-4S] cluster.

Belongs to the Mrp/NBP35 ATP-binding proteins family. NUBP1/NBP35 subfamily. In terms of assembly, heterotetramer of 2 Nubp1 and 2 Nubp2 chains. The cofactor is [4Fe-4S] cluster.

The protein localises to the cytoplasm. In terms of biological role, component of the cytosolic iron-sulfur (Fe/S) protein assembly (CIA) machinery. Required for maturation of extramitochondrial Fe-S proteins. The Nubp1-Nubp2 heterotetramer forms a Fe-S scaffold complex, mediating the de novo assembly of an Fe-S cluster and its transfer to target apoproteins. The protein is Cytosolic Fe-S cluster assembly factor Nubp1 homolog of Drosophila grimshawi (Hawaiian fruit fly).